The primary structure comprises 67 residues: Surface composition regulator (67 aa).

It belongs to the GlgS family.

Major determinant of cell surface composition. Negatively regulates motility, adhesion and synthesis of biofilm exopolysaccharides. In Salmonella paratyphi A (strain ATCC 9150 / SARB42), this protein is Surface composition regulator.